A 419-amino-acid polypeptide reads, in one-letter code: Adenylosuccinate synthetase 1 (419 aa).

11–17 serves as a coordination point for GTP; that stretch reads GDEGKGK. Aspartate 12 (proton acceptor) is an active-site residue. Residues aspartate 12 and glycine 39 each contribute to the Mg(2+) site. IMP-binding positions include 12–15, 37–40, arginine 138, glutamine 220, and arginine 298; these read DEGK and NAGH. Histidine 40 acts as the Proton donor in catalysis. Residue 294-300 participates in substrate binding; sequence TVSKRPR. Residues arginine 300, 326–328, and 407–409 contribute to the GTP site; these read NVD and SYG.

This sequence belongs to the adenylosuccinate synthetase family. As to quaternary structure, homodimer. Requires Mg(2+) as cofactor.

The protein resides in the cytoplasm. It catalyses the reaction IMP + L-aspartate + GTP = N(6)-(1,2-dicarboxyethyl)-AMP + GDP + phosphate + 2 H(+). The protein operates within purine metabolism; AMP biosynthesis via de novo pathway; AMP from IMP: step 1/2. Functionally, plays an important role in the de novo pathway of purine nucleotide biosynthesis. Catalyzes the first committed step in the biosynthesis of AMP from IMP. This Photorhabdus laumondii subsp. laumondii (strain DSM 15139 / CIP 105565 / TT01) (Photorhabdus luminescens subsp. laumondii) protein is Adenylosuccinate synthetase 1.